Here is a 296-residue protein sequence, read N- to C-terminus: Protoheme IX farnesyltransferase (296 aa).

9 helical membrane-spanning segments follow: residues 8-28 (VTKP…FLLA), 35-55 (YPLF…GCVF), 84-104 (VSLV…YIGA), 107-127 (LAMW…SLYM), 132-152 (VYGT…GYCA), 162-182 (LILL…IAIF), 208-228 (ITVY…GGYA), 229-249 (GYKY…MALR), and 263-283 (LFVF…IDFS).

The protein belongs to the UbiA prenyltransferase family. Protoheme IX farnesyltransferase subfamily.

Its subcellular location is the cell inner membrane. It catalyses the reaction heme b + (2E,6E)-farnesyl diphosphate + H2O = Fe(II)-heme o + diphosphate. It participates in porphyrin-containing compound metabolism; heme O biosynthesis; heme O from protoheme: step 1/1. Functionally, converts heme B (protoheme IX) to heme O by substitution of the vinyl group on carbon 2 of heme B porphyrin ring with a hydroxyethyl farnesyl side group. In Serratia proteamaculans (strain 568), this protein is Protoheme IX farnesyltransferase.